We begin with the raw amino-acid sequence, 282 residues long: Aspergillopepsin-2 (282 aa).

An N-terminal signal peptide occupies residues 1 to 18 (MKFSTILTGSLFATAALA). Propeptides lie at residues 19-59 (APLT…GTTN) and 99-109 (GGGYGYWKNKR). Residues 27–39 (ARKEARAAGKRHS) show a composition bias toward basic residues. Residues 27–46 (ARKEARAAGKRHSNPPYIPG) are disordered. Gln110 is subject to Pyrrolidone carboxylic acid. Disulfide bonds link Cys115–Cys139 and Cys127–Cys210.

Belongs to the peptidase G1 family. As to quaternary structure, heterodimer of two noncovalently bound light and heavy chains.

It carries out the reaction Preferential cleavage in B chain of insulin: 3-Asn-|-Gln-4, 13-Gly-|-Ala-14, and 26-Tyr-|-Thr-27.. This chain is Aspergillopepsin-2, found in Aspergillus niger.